We begin with the raw amino-acid sequence, 452 residues long: Retrograde protein of 51 kDa (452 aa).

Positions 1–13 are enriched in basic and acidic residues; that stretch reads MQKGAKIEDEGRQ. Positions 1–50 are disordered; it reads MQKGAKIEDEGRQSRIQSRNFIIQRSDPRTRGSSVYSSRSSSYNVRSSIS. The tract at residues 1 to 75 is head; sequence MQKGAKIEDE…KGNREKEKRE (75 aa). Residues 14–23 are compositionally biased toward polar residues; that stretch reads SRIQSRNFII. The span at 33 to 50 shows a compositional bias: low complexity; that stretch reads SSVYSSRSSSYNVRSSIS. The IF rod domain occupies 72-424; that stretch reads EKREMQNLNE…KLLEGEESRV (353 aa). The interval 76–111 is coil 1A; the sequence is MQNLNERLASYIEKVHFLDAQVKKLEAENEALRNRK. Residues 112-121 form a linker 1 region; it reads VEDLQPIRDA. Residues 122 to 259 form a coil 1B region; it reads YENELRQARK…DLLDQLELLK (138 aa). Sulfoserine is present on S156. Residues 260-278 form a linker 12 region; it reads PEPIQIKGMDYADFWKSEL. The segment at 279-424 is coil 2; sequence AKCVREINLA…KLLEGEESRV (146 aa). Residues 425–452 are tail; it reads GLRTLVEQAIGTQSKGSASLKDAIQSSS.

The protein belongs to the intermediate filament family.

The polypeptide is Retrograde protein of 51 kDa (RGP51) (Lymnaea stagnalis (Great pond snail)).